The chain runs to 131 residues: C-C motif chemokine 21 (131 aa).

Positions 1–23 (MAQSLALSLLILVLAFGIPGTQG) are cleaved as a signal peptide. Cystine bridges form between cysteine 31–cysteine 57, cysteine 32–cysteine 75, and cysteine 103–cysteine 119. The segment at 89-131 (HLDKTPTPRKPVQGCRKDRGVPKNGKKGKGCKRTEQSQTPKGP) is disordered.

Belongs to the intercrine beta (chemokine CC) family. As to quaternary structure, monomer. Binds to CCR7. Interacts with PDPN; relocalizes PDPN to the basolateral membrane. Interacts with TNFAIP6 (via Link domain). Interacts with GPR174.

The protein resides in the secreted. Inhibits hemopoiesis and stimulates chemotaxis. Chemotactic in vitro for thymocytes and activated T-cells, but not for B-cells, macrophages, or neutrophils. Shows preferential activity towards naive T-cells. May play a role in mediating homing of lymphocytes to secondary lymphoid organs. Binds to atypical chemokine receptor ACKR4 and mediates the recruitment of beta-arrestin (ARRB1/2) to ACKR4. This Macaca mulatta (Rhesus macaque) protein is C-C motif chemokine 21 (CCL21).